A 255-amino-acid chain; its full sequence is 5-oxoprolinase subunit A (255 aa).

The protein belongs to the LamB/PxpA family. In terms of assembly, forms a complex composed of PxpA, PxpB and PxpC.

The enzyme catalyses 5-oxo-L-proline + ATP + 2 H2O = L-glutamate + ADP + phosphate + H(+). Its function is as follows. Catalyzes the cleavage of 5-oxoproline to form L-glutamate coupled to the hydrolysis of ATP to ADP and inorganic phosphate. This is 5-oxoprolinase subunit A from Clostridium beijerinckii (strain ATCC 51743 / NCIMB 8052) (Clostridium acetobutylicum).